We begin with the raw amino-acid sequence, 103 residues long: NADH-quinone oxidoreductase subunit K 2 (103 aa).

Transmembrane regions (helical) follow at residues 7–27 (LAWY…GFMI), 31–51 (IITI…TFVA), and 63–83 (IFVF…LGII).

The protein belongs to the complex I subunit 4L family. As to quaternary structure, NDH-1 is composed of 14 different subunits. Subunits NuoA, H, J, K, L, M, N constitute the membrane sector of the complex.

The protein localises to the cell inner membrane. It carries out the reaction a quinone + NADH + 5 H(+)(in) = a quinol + NAD(+) + 4 H(+)(out). NDH-1 shuttles electrons from NADH, via FMN and iron-sulfur (Fe-S) centers, to quinones in the respiratory chain. The immediate electron acceptor for the enzyme in this species is believed to be ubiquinone. Couples the redox reaction to proton translocation (for every two electrons transferred, four hydrogen ions are translocated across the cytoplasmic membrane), and thus conserves the redox energy in a proton gradient. The polypeptide is NADH-quinone oxidoreductase subunit K 2 (Koribacter versatilis (strain Ellin345)).